The sequence spans 117 residues: Ribonuclease P protein component (117 aa).

This sequence belongs to the RnpA family. In terms of assembly, consists of a catalytic RNA component (M1 or rnpB) and a protein subunit.

The enzyme catalyses Endonucleolytic cleavage of RNA, removing 5'-extranucleotides from tRNA precursor.. In terms of biological role, RNaseP catalyzes the removal of the 5'-leader sequence from pre-tRNA to produce the mature 5'-terminus. It can also cleave other RNA substrates such as 4.5S RNA. The protein component plays an auxiliary but essential role in vivo by binding to the 5'-leader sequence and broadening the substrate specificity of the ribozyme. The polypeptide is Ribonuclease P protein component (Thermotoga maritima (strain ATCC 43589 / DSM 3109 / JCM 10099 / NBRC 100826 / MSB8)).